Here is a 64-residue protein sequence, read N- to C-terminus: Small ribosomal subunit protein bS21 (64 aa).

The segment at 40 to 64 is disordered; the sequence is PPSVKRKIKSQEAQRRMRRTKRKRF. The segment covering 55 to 64 has biased composition (basic residues); sequence RMRRTKRKRF.

It belongs to the bacterial ribosomal protein bS21 family.

The sequence is that of Small ribosomal subunit protein bS21 from Elusimicrobium minutum (strain Pei191).